A 215-amino-acid polypeptide reads, in one-letter code: Small ribosomal subunit protein uS3 (215 aa).

Positions 38-106 constitute a KH type-2 domain; it reads LRAFLKKKLF…EVLIDIQEIR (69 aa).

This sequence belongs to the universal ribosomal protein uS3 family. As to quaternary structure, part of the 30S ribosomal subunit. Forms a tight complex with proteins S10 and S14.

In terms of biological role, binds the lower part of the 30S subunit head. Binds mRNA in the 70S ribosome, positioning it for translation. This is Small ribosomal subunit protein uS3 from Desulforapulum autotrophicum (strain ATCC 43914 / DSM 3382 / VKM B-1955 / HRM2) (Desulfobacterium autotrophicum).